The primary structure comprises 585 residues: A-type ATP synthase subunit A (585 aa).

G232–T239 lines the ATP pocket.

Belongs to the ATPase alpha/beta chains family. Has multiple subunits with at least A(3), B(3), C, D, E, F, H, I and proteolipid K(x).

Its subcellular location is the cell membrane. The enzyme catalyses ATP + H2O + 4 H(+)(in) = ADP + phosphate + 5 H(+)(out). Functionally, component of the A-type ATP synthase that produces ATP from ADP in the presence of a proton gradient across the membrane. The A chain is the catalytic subunit. The chain is A-type ATP synthase subunit A from Methanosphaera stadtmanae (strain ATCC 43021 / DSM 3091 / JCM 11832 / MCB-3).